The primary structure comprises 54 residues: UPF0391 membrane protein Sde_0270 (54 aa).

The next 2 helical transmembrane spans lie at Ile-6 to Val-26 and Gly-29 to Gly-49.

It belongs to the UPF0391 family.

It is found in the cell membrane. This is UPF0391 membrane protein Sde_0270 from Saccharophagus degradans (strain 2-40 / ATCC 43961 / DSM 17024).